A 23-amino-acid polypeptide reads, in one-letter code: Paralytic peptide 1 (23 aa).

Residues C7 and C19 are joined by a disulfide bond.

It belongs to the GBP/PSP1/paralytic peptide family. As to expression, hemolymph.

Its function is as follows. Causes rapid, rigid paralysis when injected into Lepidopteran larvae. The physiological role may be to reduce hemolymph loss following injury and promote wound healing. This chain is Paralytic peptide 1, found in Heliothis virescens (Tobacco budworm moth).